The sequence spans 330 residues: Phosphate acyltransferase (330 aa).

This sequence belongs to the PlsX family. In terms of assembly, homodimer. Probably interacts with PlsY.

The protein localises to the cytoplasm. The catalysed reaction is a fatty acyl-[ACP] + phosphate = an acyl phosphate + holo-[ACP]. Its pathway is lipid metabolism; phospholipid metabolism. In terms of biological role, catalyzes the reversible formation of acyl-phosphate (acyl-PO(4)) from acyl-[acyl-carrier-protein] (acyl-ACP). This enzyme utilizes acyl-ACP as fatty acyl donor, but not acyl-CoA. The protein is Phosphate acyltransferase of Streptococcus pneumoniae (strain ATCC 700669 / Spain 23F-1).